A 440-amino-acid polypeptide reads, in one-letter code: T-box transcription factor TBX20 (440 aa).

A DNA-binding region (T-box) is located at residues 103–282; sequence LWDKFHDLGT…SNPFAKGFRD (180 aa).

It localises to the nucleus. Functionally, transcriptional regulator that may be involved in heart developmental processes. The polypeptide is T-box transcription factor TBX20 (tbx20) (Xenopus tropicalis (Western clawed frog)).